The following is a 270-amino-acid chain: Aliphatic sulfonates import ATP-binding protein SsuB (270 aa).

Positions 17–238 constitute an ABC transporter domain; it reads LAANDLRRTF…VRGSHRLAAL (222 aa). 49–56 contributes to the ATP binding site; it reads GRSGCGKS. Residues 250–270 are disordered; it reads PGTPPEPEPVAPLPTHLRWAH. Over residues 251 to 261 the composition is skewed to pro residues; sequence GTPPEPEPVAP.

The protein belongs to the ABC transporter superfamily. Aliphatic sulfonates importer (TC 3.A.1.17.2) family. As to quaternary structure, the complex is composed of two ATP-binding proteins (SsuB), two transmembrane proteins (SsuC) and a solute-binding protein (SsuA).

The protein localises to the cell inner membrane. It catalyses the reaction ATP + H2O + aliphatic sulfonate-[sulfonate-binding protein]Side 1 = ADP + phosphate + aliphatic sulfonateSide 2 + [sulfonate-binding protein]Side 1.. In terms of biological role, part of the ABC transporter complex SsuABC involved in aliphatic sulfonates import. Responsible for energy coupling to the transport system. The chain is Aliphatic sulfonates import ATP-binding protein SsuB from Pseudomonas entomophila (strain L48).